The primary structure comprises 392 residues: MSLAHTAAEYMLSDALLPDRRGPRLKGLRLELPLDRIVKFVAVGSPLLLMSLAFAQEFSSGSPISCFSPSNFSIRQAAYVDSSCWDSLLHHKQDGPGQDKMKSLWPHKALPYSLLALALLMYLPVLLWQYAAVPALSSDLLFIISELDKSYNRSIRLVQHMLKIRQKSSDPYVFWNELEKARKERYFEFPLLERYLACKQRSHSLVATYLLRNSLLLIFTSATYLYLGHFHLDVFFQEEFSCSIKTGLLSDETHVPNLITCRLTSLSIFQIVSLSSVAIYTILVPVIIYNLTRLCRWDKRLLSVYEMLPAFDLLSRKMLGCPINDLNVILLFLRANISELISFSWLSVLCVLKDTTTQKHNIDTVVDFMTLLAGLEPSKPKHLTNSACDEHP.

Residues 1 to 39 (MSLAHTAAEYMLSDALLPDRRGPRLKGLRLELPLDRIVK) lie on the Cytoplasmic side of the membrane. Residues 40-60 (FVAVGSPLLLMSLAFAQEFSS) traverse the membrane as a helical segment. Over 61–113 (GSPISCFSPSNFSIRQAAYVDSSCWDSLLHHKQDGPGQDKMKSLWPHKALPYS) the chain is Extracellular. Asn71 carries N-linked (GlcNAc...) asparagine glycosylation. The helical transmembrane segment at 114 to 134 (LLALALLMYLPVLLWQYAAVP) threads the bilayer. The Cytoplasmic segment spans residues 135-215 (ALSSDLLFII…VATYLLRNSL (81 aa)). A helical membrane pass occupies residues 216 to 236 (LLIFTSATYLYLGHFHLDVFF). The Extracellular segment spans residues 237-267 (QEEFSCSIKTGLLSDETHVPNLITCRLTSLS). A helical transmembrane segment spans residues 268–288 (IFQIVSLSSVAIYTILVPVII). Residues 289-392 (YNLTRLCRWD…LTNSACDEHP (104 aa)) lie on the Cytoplasmic side of the membrane.

This sequence belongs to the pannexin family. Homoheptameric.

It is found in the cell membrane. The protein resides in the cell junction. Its subcellular location is the gap junction. The protein localises to the endoplasmic reticulum membrane. It catalyses the reaction Ca(2+)(in) = Ca(2+)(out). It carries out the reaction ATP(in) = ATP(out). Regulator of osteoblast differentiation by functionning as a Ca(2+) channel in the endoplasmic reticulum which regulates calmodulin (CaM) pathways. Allows ATP release into the extracellular space and activation or purinergic receptors. In Homo sapiens (Human), this protein is Pannexin-3.